A 61-amino-acid polypeptide reads, in one-letter code: Metallothionein-1C (61 aa).

The segment at 1 to 29 is beta; that stretch reads MDPNCSCSTGGSCSCAGSCTCKACRCTSC. 20 residues coordinate a divalent metal cation: cysteine 5, cysteine 7, cysteine 13, cysteine 15, cysteine 19, cysteine 21, cysteine 24, cysteine 26, cysteine 29, cysteine 33, cysteine 34, cysteine 36, cysteine 37, cysteine 41, cysteine 44, cysteine 48, cysteine 50, cysteine 57, cysteine 59, and cysteine 60. The tract at residues 30-61 is alpha; it reads KKSCCSCCPAGCARCAQGCICKGASDKCSCCA.

Belongs to the metallothionein superfamily. Type 1 family. As to quaternary structure, monomer.

Its function is as follows. Metallothioneins have a high content of cysteine residues that bind various heavy metals; these proteins are transcriptionally regulated by both heavy metals and glucocorticoids. This is Metallothionein-1C (MT1C) from Sus scrofa (Pig).